The following is a 647-amino-acid chain: DNA mismatch repair protein MutL (647 aa).

It belongs to the DNA mismatch repair MutL/HexB family.

This protein is involved in the repair of mismatches in DNA. It is required for dam-dependent methyl-directed DNA mismatch repair. May act as a 'molecular matchmaker', a protein that promotes the formation of a stable complex between two or more DNA-binding proteins in an ATP-dependent manner without itself being part of a final effector complex. In Bacillus cereus (strain ATCC 10987 / NRS 248), this protein is DNA mismatch repair protein MutL.